Consider the following 298-residue polypeptide: Tyrosine recombinase XerC (298 aa).

Residues 1 to 85 enclose the Core-binding (CB) domain; it reads MQQQLDAYCA…AVRGLYHYLN (85 aa). The Tyr recombinase domain occupies 106 to 285; that stretch reads RLPKTLDTDR…DFQHLAAVYD (180 aa). Active-site residues include Arg146, Lys170, His237, Arg240, and His263. The active-site O-(3'-phospho-DNA)-tyrosine intermediate is the Tyr272.

This sequence belongs to the 'phage' integrase family. XerC subfamily. In terms of assembly, forms a cyclic heterotetrameric complex composed of two molecules of XerC and two molecules of XerD.

Its subcellular location is the cytoplasm. Its function is as follows. Site-specific tyrosine recombinase, which acts by catalyzing the cutting and rejoining of the recombining DNA molecules. The XerC-XerD complex is essential to convert dimers of the bacterial chromosome into monomers to permit their segregation at cell division. It also contributes to the segregational stability of plasmids. The protein is Tyrosine recombinase XerC of Pseudomonas fluorescens (strain ATCC BAA-477 / NRRL B-23932 / Pf-5).